The following is a 263-amino-acid chain: 4-hydroxy-2-oxo-heptane-1,7-dioate aldolase (263 aa).

His-45 (proton acceptor) is an active-site residue. Residue Gln-147 coordinates substrate. Glu-149 provides a ligand contact to a divalent metal cation. The substrate site is built by Ala-174 and Asp-175. Asp-175 contacts a divalent metal cation.

It belongs to the HpcH/HpaI aldolase family. As to quaternary structure, homohexamer; trimer of dimers. It depends on a divalent metal cation as a cofactor.

It carries out the reaction 4-hydroxy-2-oxoheptanedioate = succinate semialdehyde + pyruvate. It participates in aromatic compound metabolism; 4-hydroxyphenylacetate degradation; pyruvate and succinate semialdehyde from 4-hydroxyphenylacetate: step 7/7. Catalyzes the reversible retro-aldol cleavage of 4-hydroxy-2-ketoheptane-1,7-dioate (HKHD) to pyruvate and succinic semialdehyde. The chain is 4-hydroxy-2-oxo-heptane-1,7-dioate aldolase from Salmonella arizonae (strain ATCC BAA-731 / CDC346-86 / RSK2980).